A 343-amino-acid polypeptide reads, in one-letter code: Probable dual-specificity RNA methyltransferase RlmN (343 aa).

E94 (proton acceptor) is an active-site residue. The Radical SAM core domain occupies 100-330 (YDSRVTVCVS…ATVRMSMGSD (231 aa)). C107 and C335 are joined by a disulfide. [4Fe-4S] cluster-binding residues include C114, C118, and C121. S-adenosyl-L-methionine is bound by residues 161–162 (GE), S193, 216–218 (SLH), and N292. The active-site S-methylcysteine intermediate is the C335.

This sequence belongs to the radical SAM superfamily. RlmN family. [4Fe-4S] cluster serves as cofactor.

It is found in the cytoplasm. The catalysed reaction is adenosine(2503) in 23S rRNA + 2 reduced [2Fe-2S]-[ferredoxin] + 2 S-adenosyl-L-methionine = 2-methyladenosine(2503) in 23S rRNA + 5'-deoxyadenosine + L-methionine + 2 oxidized [2Fe-2S]-[ferredoxin] + S-adenosyl-L-homocysteine. It carries out the reaction adenosine(37) in tRNA + 2 reduced [2Fe-2S]-[ferredoxin] + 2 S-adenosyl-L-methionine = 2-methyladenosine(37) in tRNA + 5'-deoxyadenosine + L-methionine + 2 oxidized [2Fe-2S]-[ferredoxin] + S-adenosyl-L-homocysteine. In terms of biological role, specifically methylates position 2 of adenine 2503 in 23S rRNA and position 2 of adenine 37 in tRNAs. The chain is Probable dual-specificity RNA methyltransferase RlmN from Clostridioides difficile (strain 630) (Peptoclostridium difficile).